The following is a 308-amino-acid chain: Lipoyl synthase (308 aa).

[4Fe-4S] cluster is bound by residues C48, C53, C59, C74, C78, C81, and S287. In terms of domain architecture, Radical SAM core spans W60 to F277.

Belongs to the radical SAM superfamily. Lipoyl synthase family. The cofactor is [4Fe-4S] cluster.

It is found in the cytoplasm. The catalysed reaction is [[Fe-S] cluster scaffold protein carrying a second [4Fe-4S](2+) cluster] + N(6)-octanoyl-L-lysyl-[protein] + 2 oxidized [2Fe-2S]-[ferredoxin] + 2 S-adenosyl-L-methionine + 4 H(+) = [[Fe-S] cluster scaffold protein] + N(6)-[(R)-dihydrolipoyl]-L-lysyl-[protein] + 4 Fe(3+) + 2 hydrogen sulfide + 2 5'-deoxyadenosine + 2 L-methionine + 2 reduced [2Fe-2S]-[ferredoxin]. The protein operates within protein modification; protein lipoylation via endogenous pathway; protein N(6)-(lipoyl)lysine from octanoyl-[acyl-carrier-protein]: step 2/2. Its function is as follows. Catalyzes the radical-mediated insertion of two sulfur atoms into the C-6 and C-8 positions of the octanoyl moiety bound to the lipoyl domains of lipoate-dependent enzymes, thereby converting the octanoylated domains into lipoylated derivatives. This is Lipoyl synthase from Chlamydia muridarum (strain MoPn / Nigg).